The following is a 372-amino-acid chain: tRNA pseudouridine synthase D (372 aa).

D85 serves as the catalytic Nucleophile. A TRUD domain is found at 160–330; it reads GFTNYFGYQR…MQGSRRFMWG (171 aa).

The protein belongs to the pseudouridine synthase TruD family.

The enzyme catalyses uridine(13) in tRNA = pseudouridine(13) in tRNA. Its function is as follows. Responsible for synthesis of pseudouridine from uracil-13 in transfer RNAs. In Campylobacter jejuni subsp. jejuni serotype O:23/36 (strain 81-176), this protein is tRNA pseudouridine synthase D.